A 318-amino-acid polypeptide reads, in one-letter code: Probable 3-hydroxyisobutyrate dehydrogenase-like 3, mitochondrial (318 aa).

Residues 35 to 64 (TRIG…TVYA) and serine 129 each bind NAD(+). Lysine 203 is an active-site residue. Lysine 271 provides a ligand contact to NAD(+).

This sequence belongs to the HIBADH-related family. 3-hydroxyisobutyrate dehydrogenase subfamily.

Its subcellular location is the mitochondrion. It catalyses the reaction 3-hydroxy-2-methylpropanoate + NAD(+) = 2-methyl-3-oxopropanoate + NADH + H(+). It functions in the pathway amino-acid degradation; L-valine degradation. This Arabidopsis thaliana (Mouse-ear cress) protein is Probable 3-hydroxyisobutyrate dehydrogenase-like 3, mitochondrial.